Reading from the N-terminus, the 377-residue chain is Anhydro-N-acetylmuramic acid kinase (377 aa).

18–25 contacts ATP; the sequence is GTSADGID.

Belongs to the anhydro-N-acetylmuramic acid kinase family.

It carries out the reaction 1,6-anhydro-N-acetyl-beta-muramate + ATP + H2O = N-acetyl-D-muramate 6-phosphate + ADP + H(+). The protein operates within amino-sugar metabolism; 1,6-anhydro-N-acetylmuramate degradation. It functions in the pathway cell wall biogenesis; peptidoglycan recycling. Catalyzes the specific phosphorylation of 1,6-anhydro-N-acetylmuramic acid (anhMurNAc) with the simultaneous cleavage of the 1,6-anhydro ring, generating MurNAc-6-P. Is required for the utilization of anhMurNAc either imported from the medium or derived from its own cell wall murein, and thus plays a role in cell wall recycling. This chain is Anhydro-N-acetylmuramic acid kinase, found in Xanthomonas campestris pv. campestris (strain 8004).